A 525-amino-acid chain; its full sequence is GMP synthase [glutamine-hydrolyzing] (525 aa).

The region spanning 8 to 207 (KILILDFGSQ…ALDICQCEAN (200 aa)) is the Glutamine amidotransferase type-1 domain. Residue cysteine 85 is the Nucleophile of the active site. Residues histidine 181 and glutamate 183 contribute to the active site. The GMPS ATP-PPase domain maps to 208–400 (WKPSSIIEDA…LGLPYNMLYR (193 aa)). 235–241 (SGGVDSS) serves as a coordination point for ATP.

As to quaternary structure, homodimer.

It carries out the reaction XMP + L-glutamine + ATP + H2O = GMP + L-glutamate + AMP + diphosphate + 2 H(+). It functions in the pathway purine metabolism; GMP biosynthesis; GMP from XMP (L-Gln route): step 1/1. Its function is as follows. Catalyzes the synthesis of GMP from XMP. This chain is GMP synthase [glutamine-hydrolyzing], found in Shewanella loihica (strain ATCC BAA-1088 / PV-4).